We begin with the raw amino-acid sequence, 188 residues long: Elongation factor P (188 aa).

Belongs to the elongation factor P family.

Its subcellular location is the cytoplasm. It participates in protein biosynthesis; polypeptide chain elongation. Functionally, involved in peptide bond synthesis. Stimulates efficient translation and peptide-bond synthesis on native or reconstituted 70S ribosomes in vitro. Probably functions indirectly by altering the affinity of the ribosome for aminoacyl-tRNA, thus increasing their reactivity as acceptors for peptidyl transferase. This chain is Elongation factor P, found in Bacteroides fragilis (strain ATCC 25285 / DSM 2151 / CCUG 4856 / JCM 11019 / LMG 10263 / NCTC 9343 / Onslow / VPI 2553 / EN-2).